The sequence spans 860 residues: GAS2-like protein 2 (860 aa).

Positions 1-12 are enriched in basic residues; it reads MSQHVGHGRRPR. The interval 1–22 is disordered; the sequence is MSQHVGHGRRPRTPGPPVRSIR. The 128-residue stretch at 32-159 folds into the Calponin-homology (CH) domain; that stretch reads EAMKEDLAEW…CLLELGRRAW (128 aa). In terms of domain architecture, GAR spans 201–273; sequence CHFHNLDQMV…HYLDKHDPCR (73 aa). Disordered stretches follow at residues 281 to 459, 473 to 574, 697 to 743, 758 to 781, and 801 to 860; these read PGSF…SLAS, QLSE…RHTS, TTVR…KGKR, KLRPRIRPRRDHRPEKRPSRIPKP, and ATLG…ESWV. A compositionally biased stretch (polar residues) spans 301–316; the sequence is GPSQPQPTMTISRSQS. A compositionally biased stretch (basic and acidic residues) spans 347–364; the sequence is PPVRARTLREDPLPRSQE. Polar residues-rich tracts occupy residues 365-393 and 473-485; these read KPTPSQRMSSPGPQFSSTCRGPDLQSTLS and QLSEPMTVHSSSP. Residues 431 to 860 form an interaction with ADORA2A and GNAS region; it reads QRLQIPEATS…PLSPEEESWV (430 aa). Basic and acidic residues predominate over residues 530–549; sequence NLDRSTHGHHSVEASGDHQT. A compositionally biased stretch (polar residues) spans 724-733; sequence RSCSDPSSDK. Positions 758–768 are enriched in basic residues; the sequence is KLRPRIRPRRD. The segment covering 828 to 840 has biased composition (polar residues); the sequence is SNISLESSIQPAE.

The protein belongs to the GAS2 family. In terms of assembly, interacts with ADORA2A (via its cytoplasmic C-terminal domain). Interacts with GNAS, GNAL, GNAQ, and GNA13. Interacts with MAPRE1. In terms of tissue distribution, expressed in tracheal epithelial cells (at protein level).

It localises to the cytoplasm. The protein resides in the cytoskeleton. It is found in the cell membrane. The protein localises to the stress fiber. Its subcellular location is the cilium basal body. In terms of biological role, involved in the cross-linking of microtubules and microfilaments. Regulates microtubule dynamics and stability by interacting with microtubule plus-end tracking proteins, such as MAPRE1, to regulate microtubule growth along actin stress fibers. Enhances ADORA2-mediated adenylyl cyclase activation by acting as a scaffold to recruit trimeric G-protein complexes to ADORA2A. Regulates ciliary orientation and performance in cells located in the airway. This is GAS2-like protein 2 (Gas2l2) from Mus musculus (Mouse).